The sequence spans 295 residues: Methionine aminopeptidase (295 aa).

His-63 is a substrate binding site. Residues Asp-83, Asp-94, and His-154 each contribute to the a divalent metal cation site. His-162 lines the substrate pocket. A divalent metal cation is bound by residues Glu-188 and Glu-281.

The protein belongs to the peptidase M24A family. Methionine aminopeptidase archaeal type 2 subfamily. Monomer. Co(2+) serves as cofactor. It depends on Zn(2+) as a cofactor. Requires Mn(2+) as cofactor. The cofactor is Fe(2+).

It catalyses the reaction Release of N-terminal amino acids, preferentially methionine, from peptides and arylamides.. Functionally, removes the N-terminal methionine from nascent proteins. The N-terminal methionine is often cleaved when the second residue in the primary sequence is small and uncharged (Met-Ala-, Cys, Gly, Pro, Ser, Thr, or Val). The polypeptide is Methionine aminopeptidase (Thermococcus kodakarensis (strain ATCC BAA-918 / JCM 12380 / KOD1) (Pyrococcus kodakaraensis (strain KOD1))).